Here is a 233-residue protein sequence, read N- to C-terminus: NAD(P)H-hydrate epimerase (233 aa).

The YjeF N-terminal domain occupies 10 to 217 (AINVDLELFN…ALQRKYELNL (208 aa)). A (6S)-NADPHX-binding site is contributed by 60 to 64 (NNGGD). Asn-61 and Asp-125 together coordinate K(+). (6S)-NADPHX-binding positions include 129-135 (GFSFKPP) and Asp-158. Ser-161 lines the K(+) pocket.

This sequence belongs to the NnrE/AIBP family. The cofactor is K(+).

It carries out the reaction (6R)-NADHX = (6S)-NADHX. It catalyses the reaction (6R)-NADPHX = (6S)-NADPHX. Catalyzes the epimerization of the S- and R-forms of NAD(P)HX, a damaged form of NAD(P)H that is a result of enzymatic or heat-dependent hydration. This is a prerequisite for the S-specific NAD(P)H-hydrate dehydratase to allow the repair of both epimers of NAD(P)HX. In Drosophila grimshawi (Hawaiian fruit fly), this protein is NAD(P)H-hydrate epimerase.